Consider the following 326-residue polypeptide: ELAV-like protein 1 (326 aa).

At S2 the chain carries N-acetylserine. S2 is subject to Phosphoserine. The RRM 1 domain occupies 20–98 (TNLIVNYLPQ…KTIKVSYARP (79 aa)). S100 and S158 each carry phosphoserine. An RRM 2 domain is found at 106 to 186 (ANLYISGLPR…EPITVKFAAN (81 aa)). Residue K191 forms a Glycyl lysine isopeptide (Lys-Gly) (interchain with G-Cter in SUMO2) linkage. 2 positions are modified to phosphoserine: S197 and S202. Position 206 is an omega-N-methylarginine (R206). R217 bears the Asymmetric dimethylarginine; by CARM1; alternate mark. Omega-N-methylarginine; alternate is present on R217. Phosphoserine occurs at positions 221 and 318. The 79-residue stretch at 244 to 322 (WCIFIYNLGQ…KILQVSFKTN (79 aa)) folds into the RRM 3 domain.

Belongs to the RRM elav family. Monomer and homodimer (in vitro). Interacts with ANP32A. Interacts with ZNF385A; the interaction is indirect and mRNA-dependent and may regulate p53/TP53 expression. Identified in a mRNP complex, at least composed of DHX9, DDX3X, ELAVL1, HNRNPU, IGF2BP1, ILF3, PABPC1, PCBP2, PTBP2, STAU1, STAU2, SYNCRIP and YBX1. Interacts with AGO1 and AGO2. Interacts with IGF2BP1; the interaction is enhanced by SEPIN14P20 peptide RBPR. Interacts with IGF2BP2 and IGF2BP3. Interacts with HNRNPL. Interacts with DHX36; this interaction occurs in a RNA-dependent manner. Interacts with ILF3; this interaction occurs in a RNA-dependent manner. Interacts with PLEKHN1. Interacts with SHFL; the interaction increases in presence of RNA. Interacts with YBX1; interaction recruits ELAVL1 on C5-methylcytosine (m5C)-containing mRNAs, thereby promoting mRNA stability. Interacts with FXR1. Post-translationally, phosphorylated by MAPKAPK2. Phosphorylated by PRKCD. In terms of processing, methylated at Arg-217 by CARM1 in macrophages in response to LPS challenge. In terms of tissue distribution, ubiquitous. Detected in brain, liver, thymus and muscle.

Its subcellular location is the cytoplasm. The protein localises to the nucleus. The protein resides in the stress granule. It is found in the P-body. Functionally, RNA-binding protein that binds to the 3'-UTR region of mRNAs and increases their stability. Involved in embryonic stem cell (ESC) differentiation: preferentially binds mRNAs that are not methylated by N6-methyladenosine (m6A), stabilizing them, promoting ESC differentiation. Has also been shown to be capable of binding to m6A-containing mRNAs and contributes to MYC stability by binding to m6A-containing MYC mRNAs. Binds to poly-U elements and AU-rich elements (AREs) in the 3'-UTR of target mRNAs. Binds avidly to the AU-rich element in FOS and IL3/interleukin-3 mRNAs. In the case of the FOS AU-rich element, binds to a core element of 27 nucleotides that contain AUUUA, AUUUUA, and AUUUUUA motifs. Binds preferentially to the 5'-UUUU[AG]UUU-3' motif in vitro. With ZNF385A, binds the 3'-UTR of p53/TP53 mRNA to control their nuclear export induced by CDKN2A. Hence, may regulate p53/TP53 expression and mediate in part the CDKN2A anti-proliferative activity. May also bind with ZNF385A the CCNB1 mRNA. Increases the stability of the leptin mRNA harboring an AU-rich element (ARE) in its 3' UTR. This chain is ELAV-like protein 1 (ELAVL1), found in Homo sapiens (Human).